A 151-amino-acid chain; its full sequence is Cytochrome c-type biogenesis protein CcmE (151 aa).

The Cytoplasmic portion of the chain corresponds to 1–8 (MNPQRKKR). A helical; Signal-anchor for type II membrane protein transmembrane segment spans residues 9–29 (LFLILGLLAGVAVAVGFALSA). Topologically, residues 30 to 151 (LQQNINLFYT…QAASGAEAKP (122 aa)) are periplasmic. Heme-binding residues include histidine 124 and tyrosine 128.

This sequence belongs to the CcmE/CycJ family.

The protein resides in the cell inner membrane. Heme chaperone required for the biogenesis of c-type cytochromes. Transiently binds heme delivered by CcmC and transfers the heme to apo-cytochromes in a process facilitated by CcmF and CcmH. The sequence is that of Cytochrome c-type biogenesis protein CcmE from Pseudomonas putida (strain W619).